Here is a 462-residue protein sequence, read N- to C-terminus: CD-NTase-associated protein 4 (462 aa).

An N-terminal endonuclease domain region spans residues 1–226 (MSASLLEKQS…FENFICHALE (226 aa)). Active-site residues include Asp-50, Glu-67, and Lys-69. Position 50 (Asp-50) interacts with Mg(2+). The C-terminal SAVED domain stretch occupies residues 235-462 (DPIKINLSAS…QYIPTAELNL (228 aa)). Residues 299-301 (KQR), Trp-449, and Tyr-454 each bind 2',3',3'-c-tri-AMP.

It belongs to the Cap4 nuclease family. A monomer in the absence of ligand, in its presence it forms oligomers. Requires a divalent metal cation as cofactor.

With respect to regulation, DNase activity is activated upon ligand binding. Inhibited by EDTA. Functionally, effector DNase of a CBASS antivirus system. CBASS (cyclic oligonucleotide-based antiphage signaling system) provides immunity against bacteriophage. The CD-NTase protein synthesizes cyclic nucleotides in response to infection; these serve as specific second messenger signals. The signals activate a diverse range of effectors, leading to bacterial cell death and thus abortive phage infection. A type II-C(AAAA) CBASS system. In terms of biological role, binds cyclic nucleotide second messengers (synthesized by CdnD, the cognate CD-NTase in the CBASS operon). Ligand binding activates it to endonucleolytically degrade dsDNA to approximately 6 bp length fragments, with a preference for 5'-C or 5'-G cleavage site. The minor product of CdnD is the activating nucleotide; also binds the major product (2',3',3'-cyclic AMP-AMP-AMP) but is not activated by it. Only binds DNA in the presence of ligand. Is not activated by c-di-AMP, c-di-GMP, 3'3'-cyclic GMP-AMP (3'3'-cGAMP) or 3',3',3'-cyclic AMP-AMP-GMP. This chain is CD-NTase-associated protein 4, found in Acinetobacter sp. (strain ATCC 27244 / 9458).